The following is a 225-amino-acid chain: Cytochrome c oxidase subunit 2 (225 aa).

The Mitochondrial intermembrane segment spans residues 1–25 (MSTWMMFMFQESNSLYADNLVSFHN). The helical transmembrane segment at 26-47 (MVMIIVIMISTLTVYIIFDLFL) threads the bilayer. Residues 48 to 62 (NKFSNLYLLKNHNIE) are Mitochondrial matrix-facing. Residues 63-82 (IIWMIVPIVILLIICFPSLK) traverse the membrane as a helical segment. Residues 83–225 (ILYLIDEIVN…YFMNWIYKMN (143 aa)) lie on the Mitochondrial intermembrane side of the membrane. The Cu cation site is built by histidine 159, cysteine 194, glutamate 196, cysteine 198, histidine 202, and methionine 205. Glutamate 196 contributes to the Mg(2+) binding site.

The protein belongs to the cytochrome c oxidase subunit 2 family. Component of the cytochrome c oxidase (complex IV, CIV), a multisubunit enzyme composed of a catalytic core of 3 subunits and several supernumerary subunits. The complex exists as a monomer or a dimer and forms supercomplexes (SCs) in the inner mitochondrial membrane with ubiquinol-cytochrome c oxidoreductase (cytochrome b-c1 complex, complex III, CIII). The cofactor is Cu cation.

Its subcellular location is the mitochondrion inner membrane. It carries out the reaction 4 Fe(II)-[cytochrome c] + O2 + 8 H(+)(in) = 4 Fe(III)-[cytochrome c] + 2 H2O + 4 H(+)(out). Component of the cytochrome c oxidase, the last enzyme in the mitochondrial electron transport chain which drives oxidative phosphorylation. The respiratory chain contains 3 multisubunit complexes succinate dehydrogenase (complex II, CII), ubiquinol-cytochrome c oxidoreductase (cytochrome b-c1 complex, complex III, CIII) and cytochrome c oxidase (complex IV, CIV), that cooperate to transfer electrons derived from NADH and succinate to molecular oxygen, creating an electrochemical gradient over the inner membrane that drives transmembrane transport and the ATP synthase. Cytochrome c oxidase is the component of the respiratory chain that catalyzes the reduction of oxygen to water. Electrons originating from reduced cytochrome c in the intermembrane space (IMS) are transferred via the dinuclear copper A center (CU(A)) of subunit 2 and heme A of subunit 1 to the active site in subunit 1, a binuclear center (BNC) formed by heme A3 and copper B (CU(B)). The BNC reduces molecular oxygen to 2 water molecules using 4 electrons from cytochrome c in the IMS and 4 protons from the mitochondrial matrix. The polypeptide is Cytochrome c oxidase subunit 2 (COII) (Apis florea (Dwarf honeybee)).